A 516-amino-acid polypeptide reads, in one-letter code: uncharacterized protein (516 aa).

2 PFTB repeats span residues 45-86 (RQDA…QRAD) and 401-443 (DERA…DGSE).

This is an uncharacterized protein from Sinorhizobium fredii (strain NBRC 101917 / NGR234).